Here is an 873-residue protein sequence, read N- to C-terminus: Bifunctional levopimaradiene synthase, chloroplastic (873 aa).

A chloroplast-targeting transit peptide spans 1 to 59; it reads MAGVLFANLPCSLQLSPKVPFRQSTNILIPFHKRSSFGFNAQHCVRSHLRLRWNCVGIH. Lysine 271 is a binding site for substrate. Mg(2+) contacts are provided by aspartate 405 and aspartate 407. Positions 405–408 match the DXDD motif motif; that stretch reads DVDD. Lysine 492 serves as a coordination point for substrate. The Mg(2+) site is built by aspartate 624, aspartate 628, asparagine 769, threonine 773, and glutamate 777. Positions 624–628 match the DDXXD motif motif; the sequence is DDLYD.

Belongs to the terpene synthase family. Tpsd subfamily. Requires Mg(2+) as cofactor. Expressed in roots.

Its subcellular location is the plastid. The protein resides in the chloroplast. It carries out the reaction (2E,6E,10E)-geranylgeranyl diphosphate = (+)-copalyl diphosphate. The enzyme catalyses (+)-copalyl diphosphate = abieta-8(14),12-diene + diphosphate. It participates in terpene metabolism; ginkgolide biosynthesis. Its function is as follows. Catalyzes the initial cyclization step in the biosynthesis of ginkgolides, a structurally unique family of diterpenoids that are highly specific platelet-activating-factor receptor antagonists. Bifunctional enzyme that catalyzes two sequential cyclizations of geranylgeranyl diphosphate (GGPP) to levopimaradiene. In Ginkgo biloba (Ginkgo), this protein is Bifunctional levopimaradiene synthase, chloroplastic (LPS).